The sequence spans 142 residues: uncharacterized protein (142 aa).

The next 2 membrane-spanning stretches (helical) occupy residues 12-29 (NAILRPISDIFVLIYGLL) and 44-66 (IYGQLSLLLWGTKFLATILGVTA).

Its subcellular location is the cell membrane. This is an uncharacterized protein from Archaeoglobus fulgidus (strain ATCC 49558 / DSM 4304 / JCM 9628 / NBRC 100126 / VC-16).